A 425-amino-acid chain; its full sequence is UPF0597 protein UNCMA_16400 (425 aa).

The protein belongs to the UPF0597 family.

This is UPF0597 protein UNCMA_16400 from Methanocella arvoryzae (strain DSM 22066 / NBRC 105507 / MRE50).